A 264-amino-acid chain; its full sequence is Phosphonoacetaldehyde hydrolase (264 aa).

Asp-9 functions as the Nucleophile in the catalytic mechanism. Mg(2+) is bound by residues Asp-9 and Ala-11. The Schiff-base intermediate with substrate role is filled by Lys-50. Asp-183 lines the Mg(2+) pocket.

Belongs to the HAD-like hydrolase superfamily. PhnX family. Homodimer. Mg(2+) serves as cofactor.

The enzyme catalyses phosphonoacetaldehyde + H2O = acetaldehyde + phosphate + H(+). In terms of biological role, involved in phosphonate degradation. This is Phosphonoacetaldehyde hydrolase from Bacillus thuringiensis (strain Al Hakam).